The primary structure comprises 108 residues: Pyrimidine/purine nucleoside phosphorylase (108 aa).

This sequence belongs to the nucleoside phosphorylase PpnP family.

The catalysed reaction is a purine D-ribonucleoside + phosphate = a purine nucleobase + alpha-D-ribose 1-phosphate. The enzyme catalyses adenosine + phosphate = alpha-D-ribose 1-phosphate + adenine. It catalyses the reaction cytidine + phosphate = cytosine + alpha-D-ribose 1-phosphate. It carries out the reaction guanosine + phosphate = alpha-D-ribose 1-phosphate + guanine. The catalysed reaction is inosine + phosphate = alpha-D-ribose 1-phosphate + hypoxanthine. The enzyme catalyses thymidine + phosphate = 2-deoxy-alpha-D-ribose 1-phosphate + thymine. It catalyses the reaction uridine + phosphate = alpha-D-ribose 1-phosphate + uracil. It carries out the reaction xanthosine + phosphate = alpha-D-ribose 1-phosphate + xanthine. Its function is as follows. Catalyzes the phosphorolysis of diverse nucleosides, yielding D-ribose 1-phosphate and the respective free bases. Can use uridine, adenosine, guanosine, cytidine, thymidine, inosine and xanthosine as substrates. Also catalyzes the reverse reactions. This chain is Pyrimidine/purine nucleoside phosphorylase, found in Acinetobacter baylyi (strain ATCC 33305 / BD413 / ADP1).